We begin with the raw amino-acid sequence, 131 residues long: Large ribosomal subunit protein uL22 (131 aa).

Belongs to the universal ribosomal protein uL22 family. Part of the 50S ribosomal subunit.

This protein binds specifically to 23S rRNA; its binding is stimulated by other ribosomal proteins, e.g. L4, L17, and L20. It is important during the early stages of 50S assembly. It makes multiple contacts with different domains of the 23S rRNA in the assembled 50S subunit and ribosome. In terms of biological role, the globular domain of the protein is located near the polypeptide exit tunnel on the outside of the subunit, while an extended beta-hairpin is found that lines the wall of the exit tunnel in the center of the 70S ribosome. The polypeptide is Large ribosomal subunit protein uL22 (Phytoplasma mali (strain AT)).